Reading from the N-terminus, the 218-residue chain is Redox-sensing transcriptional repressor Rex (218 aa).

The H-T-H motif DNA-binding region spans 25-64; sequence WYLSYVQLLHADGCESVSSTRIARAVGVDASLVAKDLSYV. 99–104 provides a ligand contact to NAD(+); sequence GVGSLG.

It belongs to the transcriptional regulatory Rex family. As to quaternary structure, homodimer.

The protein localises to the cytoplasm. Functionally, modulates transcription in response to changes in cellular NADH/NAD(+) redox state. The protein is Redox-sensing transcriptional repressor Rex of Porphyromonas gingivalis (strain ATCC 33277 / DSM 20709 / CIP 103683 / JCM 12257 / NCTC 11834 / 2561).